We begin with the raw amino-acid sequence, 448 residues long: Signal recognition particle protein (448 aa).

Residues 101–108, 182–186, and 240–243 each bind GTP; these read GLQGSGKT, DSAGR, and SKFD.

Belongs to the GTP-binding SRP family. SRP54 subfamily. As to quaternary structure, part of the signal recognition particle protein translocation system, which is composed of SRP and FtsY. SRP is a ribonucleoprotein composed of Ffh and a 4.5S RNA molecule.

Its subcellular location is the cytoplasm. It carries out the reaction GTP + H2O = GDP + phosphate + H(+). Functionally, involved in targeting and insertion of nascent membrane proteins into the cytoplasmic membrane. Binds to the hydrophobic signal sequence of the ribosome-nascent chain (RNC) as it emerges from the ribosomes. The SRP-RNC complex is then targeted to the cytoplasmic membrane where it interacts with the SRP receptor FtsY. Interaction with FtsY leads to the transfer of the RNC complex to the Sec translocase for insertion into the membrane, the hydrolysis of GTP by both Ffh and FtsY, and the dissociation of the SRP-FtsY complex into the individual components. The sequence is that of Signal recognition particle protein from Helicobacter pylori (strain J99 / ATCC 700824) (Campylobacter pylori J99).